We begin with the raw amino-acid sequence, 688 residues long: Potassium-transporting ATPase ATP-binding subunit (688 aa).

The next 4 helical transmembrane spans lie at 34–54, 62–82, 219–239, and 260–280; these read PVMFVVYLGSWLTTLIWLAIL, AMFTGSIALWLWFTVLFANMA, VALTILLVALTIVFLLATATL, and VLVALLVCLIPTTIGGLLSAI. The 4-aspartylphosphate intermediate role is filled by aspartate 313. Residues aspartate 350, glutamate 354, 383–390, and lysine 401 contribute to the ATP site; that span reads FSAQTRMS. Mg(2+)-binding residues include aspartate 524 and aspartate 528. 3 helical membrane-spanning segments follow: residues 594–614, 622–642, and 662–682; these read FAIIPAAFAATYPQLNALNIM, AILSAVIFNALVIVFLIPLAL, and IYGLGGLLVPFVGIKLIDLLL.

The protein belongs to the cation transport ATPase (P-type) (TC 3.A.3) family. Type IA subfamily. The system is composed of three essential subunits: KdpA, KdpB and KdpC.

Its subcellular location is the cell inner membrane. It carries out the reaction K(+)(out) + ATP + H2O = K(+)(in) + ADP + phosphate + H(+). Its function is as follows. Part of the high-affinity ATP-driven potassium transport (or Kdp) system, which catalyzes the hydrolysis of ATP coupled with the electrogenic transport of potassium into the cytoplasm. This subunit is responsible for energy coupling to the transport system and for the release of the potassium ions to the cytoplasm. This chain is Potassium-transporting ATPase ATP-binding subunit, found in Yersinia pseudotuberculosis serotype I (strain IP32953).